Consider the following 173-residue polypeptide: Alkyl hydroperoxide reductase AhpD (173 aa).

The active-site Proton donor is the cysteine 131. A disulfide bridge connects residues cysteine 131 and cysteine 134. Catalysis depends on cysteine 134, which acts as the Cysteine sulfenic acid (-SOH) intermediate.

This sequence belongs to the AhpD family.

It catalyses the reaction N(6)-[(R)-dihydrolipoyl]-L-lysyl-[lipoyl-carrier protein] + a hydroperoxide = N(6)-[(R)-lipoyl]-L-lysyl-[lipoyl-carrier protein] + an alcohol + H2O. Antioxidant protein with alkyl hydroperoxidase activity. Required for the reduction of the AhpC active site cysteine residues and for the regeneration of the AhpC enzyme activity. In Rhizorhabdus wittichii (strain DSM 6014 / CCUG 31198 / JCM 15750 / NBRC 105917 / EY 4224 / RW1) (Sphingomonas wittichii), this protein is Alkyl hydroperoxide reductase AhpD.